The following is a 75-amino-acid chain: MKADIHPVYEAIDATCSCGNVIKTRSTLTGPLSLDVCNECHPFYTGKQKTLDIGGRVDKFKSRFGAFGATKAKQD.

Zn(2+) contacts are provided by C16, C18, C37, and C40.

It belongs to the bacterial ribosomal protein bL31 family. Type A subfamily. In terms of assembly, part of the 50S ribosomal subunit. Zn(2+) is required as a cofactor.

Functionally, binds the 23S rRNA. The chain is Large ribosomal subunit protein bL31 from Pseudomonas syringae pv. tomato (strain ATCC BAA-871 / DC3000).